Reading from the N-terminus, the 196-residue chain is Cupin-domain-containing oxidoreductase srdB (196 aa).

The region spanning 92 to 156 (DFAPGCKSNM…TSDEKPARML (65 aa)) is the Cupin type-2 domain.

It belongs to the virC family.

Functionally, cupin-domain-containing oxidoreductase; part of the gene cluster that mediates the biosynthesis of sordarial, a salicylic aldehyde structurally related to the phytotoxin pyriculol. The most interesting aspect of this pathway is formation of an aromatic product from the highly reducing polyketide synthase srdA. SrdA synthesizes a reduced polyketide chain from one molecule of acetyl-CoA and five molecules of malonyl-CoA. The polyketide chain is then reductively released as an aldehyde. The oxidoreductases srdC, srdD and srdE then oxidize one of the hydroxy groups to facilitate the intramolecular aldol condensation, followed by dehydration to yield a salicylic aldehyde. This aldehyde can undergo facile reduction by endogenous reductases to yield the alcohol 1-hydroxy-2-hydroxymethyl-3-pent-1,3-dienylbenzene. The flavin-dependent srdI counteract against the propensity of the aldehydes to be reduced under physiological conditions and is responsible for reoxidizing 1-hydroxy-2-hydroxymethyl-3-pent-1,3-dienylbenzene back to the salicylic aldehyde. This salicylic aldehyde is then selectively epoxidized by the cupin-domain-containing oxidoreductase srdB to yield the epoxide, which can be hydrolyzed stereoselectively by the hydrolase srdG to give the final product sordarial. In Neurospora crassa (strain ATCC 24698 / 74-OR23-1A / CBS 708.71 / DSM 1257 / FGSC 987), this protein is Cupin-domain-containing oxidoreductase srdB.